Here is a 376-residue protein sequence, read N- to C-terminus: Putative F-box protein At3g18330 (376 aa).

The 46-residue stretch at 1–46 folds into the F-box domain; it reads MPMPNLPKELVEEILSFVPATYLKRLSATCKPWNRLIHNDKRFARK.

The polypeptide is Putative F-box protein At3g18330 (Arabidopsis thaliana (Mouse-ear cress)).